Reading from the N-terminus, the 358-residue chain is Protein UL24 (358 aa).

It belongs to the herpesviridae US22 family.

It is found in the virion tegument. The polypeptide is Protein UL24 (UL24) (Homo sapiens (Human)).